The primary structure comprises 97 residues: Ferredoxin-3 (97 aa).

4Fe-4S ferredoxin-type domains are found at residues 18 to 47 (FAESIDKDKCIGCGRCIKVCGYPVLDLKAL) and 65 to 95 (KVMVVAHPENCIGCQACARICPKNCYTHNPL). Residues Cys-27, Cys-30, Cys-33, Cys-37, Cys-75, Cys-78, Cys-81, and Cys-85 each contribute to the [4Fe-4S] cluster site.

As to quaternary structure, homodimer. [4Fe-4S] cluster serves as cofactor.

Its function is as follows. Ferredoxins are iron-sulfur proteins that transfer electrons in a wide variety of metabolic reactions. The sequence is that of Ferredoxin-3 (fdxB) from Nostoc sp. (strain PCC 7120 / SAG 25.82 / UTEX 2576).